The chain runs to 177 residues: Large ribosomal subunit protein uL6 (177 aa).

The protein belongs to the universal ribosomal protein uL6 family. As to quaternary structure, part of the 50S ribosomal subunit.

Functionally, this protein binds to the 23S rRNA, and is important in its secondary structure. It is located near the subunit interface in the base of the L7/L12 stalk, and near the tRNA binding site of the peptidyltransferase center. This is Large ribosomal subunit protein uL6 from Pseudomonas syringae pv. tomato (strain ATCC BAA-871 / DC3000).